Here is a 375-residue protein sequence, read N- to C-terminus: tRNA-specific 2-thiouridylase MnmA (375 aa).

ATP contacts are provided by residues 7–14 and M33; that span reads GLSGGVDS. Positions 102-104 are interaction with target base in tRNA; the sequence is NPD. C107 serves as the catalytic Nucleophile. A disulfide bridge links C107 with C205. G132 serves as a coordination point for ATP. The segment at 155-157 is interaction with tRNA; sequence KDQ. The active-site Cysteine persulfide intermediate is the C205. Residues 313–314 form an interaction with tRNA region; sequence RY.

The protein belongs to the MnmA/TRMU family.

It is found in the cytoplasm. It carries out the reaction S-sulfanyl-L-cysteinyl-[protein] + uridine(34) in tRNA + AH2 + ATP = 2-thiouridine(34) in tRNA + L-cysteinyl-[protein] + A + AMP + diphosphate + H(+). Its function is as follows. Catalyzes the 2-thiolation of uridine at the wobble position (U34) of tRNA, leading to the formation of s(2)U34. In Phytoplasma australiense, this protein is tRNA-specific 2-thiouridylase MnmA.